The sequence spans 1653 residues: Alpha-2-macroglobulin (1653 aa).

An N-terminal signal peptide occupies residues 1–17 (MKKLRVAACMLMLALAG). Cys18 carries N-palmitoyl cysteine lipidation. Cys18 carries S-diacylglycerol cysteine lipidation. Positions 1187–1190 (CLEQ) form a cross-link, isoglutamyl cysteine thioester (Cys-Gln). Residues 1559–1589 (NQNLANGSASLEQSGGEVQNLLNQMQQASIK) are a coiled coil.

This sequence belongs to the protease inhibitor I39 (alpha-2-macroglobulin) family. Bacterial alpha-2-macroglobulin subfamily. As to quaternary structure, may form homooligomers.

The protein resides in the cell inner membrane. In terms of biological role, protects the bacterial cell from host peptidases. Acts by a 'trapping' mechanism. Cleavage of the bait-region domain by host peptidases leads to a global conformational change, which results in entrapment of the host peptidase and activation of the thioester bond that covalently binds the attacking host peptidase. Trapped peptidases are still active except against very large substrates. May protect the entire periplam, including the lipoproteins anchored to the periplasmic side of the outer membrane, against intruding endopeptidases. In Escherichia coli (strain K12), this protein is Alpha-2-macroglobulin (yfhM).